A 270-amino-acid polypeptide reads, in one-letter code: Phosphatidylglycerol--prolipoprotein diacylglyceryl transferase (270 aa).

The next 7 membrane-spanning stretches (helical) occupy residues 14–34 (VIFEIGPIGLRWYGLMYLLGF), 60–80 (LLFNGFMGVFLGGRIGYVLFY), 95–115 (VWEGGMSFHGGLIGVILAMLI), 128–148 (ADFVAPLIPFGLGMGRIGNFI), 176–196 (SQLYEAVLEGIVLFFILNWYI), 202–222 (IGATAGLFLLGYGIFRFIVEF), and 238–258 (ISMGQILSTPMILIGAVIMLV). R143 contacts a 1,2-diacyl-sn-glycero-3-phospho-(1'-sn-glycerol).

The protein belongs to the Lgt family.

It is found in the cell inner membrane. It catalyses the reaction L-cysteinyl-[prolipoprotein] + a 1,2-diacyl-sn-glycero-3-phospho-(1'-sn-glycerol) = an S-1,2-diacyl-sn-glyceryl-L-cysteinyl-[prolipoprotein] + sn-glycerol 1-phosphate + H(+). It functions in the pathway protein modification; lipoprotein biosynthesis (diacylglyceryl transfer). In terms of biological role, catalyzes the transfer of the diacylglyceryl group from phosphatidylglycerol to the sulfhydryl group of the N-terminal cysteine of a prolipoprotein, the first step in the formation of mature lipoproteins. This Pasteurella multocida (strain Pm70) protein is Phosphatidylglycerol--prolipoprotein diacylglyceryl transferase.